The following is a 284-amino-acid chain: 4-diphosphocytidyl-2-C-methyl-D-erythritol kinase (284 aa).

Lys22 is a catalytic residue. 104–114 (PVGAGLGGASS) is an ATP binding site. Asp146 is an active-site residue.

Belongs to the GHMP kinase family. IspE subfamily.

The enzyme catalyses 4-CDP-2-C-methyl-D-erythritol + ATP = 4-CDP-2-C-methyl-D-erythritol 2-phosphate + ADP + H(+). It functions in the pathway isoprenoid biosynthesis; isopentenyl diphosphate biosynthesis via DXP pathway; isopentenyl diphosphate from 1-deoxy-D-xylulose 5-phosphate: step 3/6. In terms of biological role, catalyzes the phosphorylation of the position 2 hydroxy group of 4-diphosphocytidyl-2C-methyl-D-erythritol. In Hydrogenobaculum sp. (strain Y04AAS1), this protein is 4-diphosphocytidyl-2-C-methyl-D-erythritol kinase.